A 702-amino-acid polypeptide reads, in one-letter code: Methionine--tRNA ligase (702 aa).

Positions 23-33 (PYANGPLHLGH) match the 'HIGH' region motif. Zn(2+) is bound by residues Cys154, Cys157, Cys167, and Cys170. The 'KMSKS' region motif lies at 341 to 345 (KMSKS). Residue Lys344 coordinates ATP. A disordered region spans residues 562–593 (LAPPPASAKQQNASMSNTAPPPTAEEPETTAP). The segment covering 569–578 (AKQQNASMSN) has biased composition (polar residues). Positions 599–702 (DFAKLDLRIG…SSAQPGMPVR (104 aa)) constitute a tRNA-binding domain.

This sequence belongs to the class-I aminoacyl-tRNA synthetase family. MetG type 1 subfamily. In terms of assembly, homodimer. The cofactor is Zn(2+).

It localises to the cytoplasm. The catalysed reaction is tRNA(Met) + L-methionine + ATP = L-methionyl-tRNA(Met) + AMP + diphosphate. In terms of biological role, is required not only for elongation of protein synthesis but also for the initiation of all mRNA translation through initiator tRNA(fMet) aminoacylation. The sequence is that of Methionine--tRNA ligase from Xylella fastidiosa (strain M23).